A 717-amino-acid chain; its full sequence is Delta-1-pyrroline-5-carboxylate synthase (717 aa).

Positions 1–296 (MDAVDSTRAF…WAPVGDVGAR (296 aa)) are glutamate 5-kinase. 3 residues coordinate substrate: Ser60, Asp157, and Asn176. ATP-binding positions include 196-197 (SD) and 236-242 (RGGMTAK). A gamma-glutamyl phosphate reductase region spans residues 297–717 (DMAVAARESS…YTHKDLTSHA (421 aa)).

The protein in the N-terminal section; belongs to the glutamate 5-kinase family. It in the C-terminal section; belongs to the gamma-glutamyl phosphate reductase family. In terms of tissue distribution, expressed at high levels in leaves and is inducible in roots subjected to salt stress.

The enzyme catalyses L-glutamate + ATP = L-glutamyl 5-phosphate + ADP. It carries out the reaction L-glutamate 5-semialdehyde + phosphate + NADP(+) = L-glutamyl 5-phosphate + NADPH + H(+). It functions in the pathway amino-acid biosynthesis; L-proline biosynthesis; L-glutamate 5-semialdehyde from L-glutamate: step 1/2. Its pathway is amino-acid biosynthesis; L-proline biosynthesis; L-glutamate 5-semialdehyde from L-glutamate: step 2/2. Feedback regulated by proline. P5CS plays a key role in proline biosynthesis, leading to osmoregulation in plants. This is Delta-1-pyrroline-5-carboxylate synthase from Actinidia deliciosa (Kiwi).